The chain runs to 134 residues: uncharacterized protein (134 aa).

Residues 4 to 24 (NLLILLSLLLVVVAIMWWLYE) traverse the membrane as a helical segment.

Its subcellular location is the membrane. This is an uncharacterized protein from Invertebrate iridescent virus 6 (IIV-6).